A 381-amino-acid chain; its full sequence is Erythronate-4-phosphate dehydrogenase (381 aa).

Substrate-binding residues include Ser-45 and Thr-66. The NAD(+) site is built by Asp-146 and Thr-173. Arg-206 is an active-site residue. Asp-230 provides a ligand contact to NAD(+). Glu-235 is a catalytic residue. The active-site Proton donor is His-252. Position 255 (Gly-255) interacts with NAD(+). Tyr-256 lines the substrate pocket.

Belongs to the D-isomer specific 2-hydroxyacid dehydrogenase family. PdxB subfamily. Homodimer.

Its subcellular location is the cytoplasm. It catalyses the reaction 4-phospho-D-erythronate + NAD(+) = (R)-3-hydroxy-2-oxo-4-phosphooxybutanoate + NADH + H(+). The protein operates within cofactor biosynthesis; pyridoxine 5'-phosphate biosynthesis; pyridoxine 5'-phosphate from D-erythrose 4-phosphate: step 2/5. Functionally, catalyzes the oxidation of erythronate-4-phosphate to 3-hydroxy-2-oxo-4-phosphonooxybutanoate. In Hahella chejuensis (strain KCTC 2396), this protein is Erythronate-4-phosphate dehydrogenase.